The following is a 735-amino-acid chain: Probable E3 ubiquitin-protein ligase MID2 (735 aa).

The segment at 30-80 (CPICLELFEDPLLLPCAHSLCFSCAHRILVSSCSSGESIEPITAFQCPTCR) adopts an RING-type zinc-finger fold. The segment at 137 to 184 (IACQFCEQDPPRDAVKTCITCEVSYCDRCLRATHPNKKPFTSHRLVEP) adopts a B box-type 1; degenerate zinc-finger fold. The B box-type 2 zinc finger occupies 190-232 (LRGITCLDHENEKVNMYCVSDDQLICALCKLVGRHRDHQVASL). Residues C195, H198, C218, and H224 each coordinate Zn(2+). The stretch at 233-301 (NDRFEKLKQT…IIQQRKQMIA (69 aa)) forms a coiled coil. A COS domain is found at 340 to 399 (LKENDQARFLQSAKNIAERVAMATASSQVLIPDINFNDAFENFALDFSREKKLLEGLDYL). In terms of domain architecture, Fibronectin type-III spans 398–531 (YLTAPNPPSI…RNSEPTRLKT (134 aa)). The B30.2/SPRY domain maps to 516 to 709 (INQAGSRNSE…ILSGLPAPDF (194 aa)).

This sequence belongs to the TRIM/RBCC family. In terms of assembly, homodimer or heterodimer with MID1. Interacts with IGBP1. Post-translationally, phosphorylated on serine and threonine residues. Low level in fetal kidney and lung, and in adult prostate, ovary and small intestine.

It is found in the cytoplasm. The protein resides in the cytoskeleton. It carries out the reaction S-ubiquitinyl-[E2 ubiquitin-conjugating enzyme]-L-cysteine + [acceptor protein]-L-lysine = [E2 ubiquitin-conjugating enzyme]-L-cysteine + N(6)-ubiquitinyl-[acceptor protein]-L-lysine.. It functions in the pathway protein modification; protein ubiquitination. In terms of biological role, E3 ubiquitin ligase that plays a role in microtubule stabilization. Mediates the 'Lys-48'-linked polyubiquitination of LRRK2 to drive its localization to microtubules and its proteasomal degradation in neurons. This ubiquitination inhibits LRRK2 kinase activation by RAB29. The chain is Probable E3 ubiquitin-protein ligase MID2 (MID2) from Homo sapiens (Human).